We begin with the raw amino-acid sequence, 294 residues long: Glycine--tRNA ligase alpha subunit (294 aa).

Belongs to the class-II aminoacyl-tRNA synthetase family. In terms of assembly, tetramer of two alpha and two beta subunits.

The protein localises to the cytoplasm. The catalysed reaction is tRNA(Gly) + glycine + ATP = glycyl-tRNA(Gly) + AMP + diphosphate. The polypeptide is Glycine--tRNA ligase alpha subunit (Natranaerobius thermophilus (strain ATCC BAA-1301 / DSM 18059 / JW/NM-WN-LF)).